The chain runs to 397 residues: Mitochondrial inner membrane magnesium transporter LPE10 (397 aa).

Residues 1–37 constitute a mitochondrion transit peptide; it reads MLLVNRAITLNLVKRCCWRSTMFMTPKRFLGTSEEES. A helical transmembrane segment spans residues 316 to 336; that stretch reads LMLLGIRFSIGMLSLGGPIFI. The YGMN motif lies at 340–343; it reads YGMN. Residues 354-374 form a helical membrane-spanning segment; it reads GFIAASAIGMISLGALYFYSI.

The protein belongs to the CorA metal ion transporter (MIT) (TC 1.A.35) family. In terms of assembly, forms homooligomers. Interacts with MRS2.

The protein localises to the mitochondrion inner membrane. Its function is as follows. Mitochondrial inner membrane magnesium transporter required for mitochondrial magnesium homeostasis. Modulates the conductance of the MRS2 channel. Involved in the splicing of mRNA group II introns in mitochondria by affecting mitochondrial magnesium concentrations, which are critical for group II intron splicing. This chain is Mitochondrial inner membrane magnesium transporter LPE10 (LPE10), found in Candida glabrata (strain ATCC 2001 / BCRC 20586 / JCM 3761 / NBRC 0622 / NRRL Y-65 / CBS 138) (Yeast).